The chain runs to 158 residues: Globin CTT-I/CTT-IA (158 aa).

Residues 1–15 (MKFLILALCVAAAMA) form the signal peptide. One can recognise a Globin domain in the interval 16-158 (GPSGDQIAAA…FVFSTLKNEL (143 aa)). Positions 74 and 109 each coordinate heme b.

This sequence belongs to the globin family. As to quaternary structure, monomer.

This chain is Globin CTT-I/CTT-IA (CTT-1), found in Chironomus thummi thummi (Midge).